The primary structure comprises 276 residues: E3 ubiquitin-protein ligase CCNB1IP1 (276 aa).

The segment at C10 to N52 adopts an RING-type; atypical zinc-finger fold. Residues M146 to R182 are a coiled coil.

In terms of assembly, interacts with CCNB1, UBE2L3 and NF2. Ubiquitinated; autoubiquitinated. In terms of processing, phosphorylated by CDK1 on serine or threonine residues (in vitro). Expressed predominantly in the testes and 17 day embryos (corresponding to prophase I in females). Weakly or not expressed in other tissues.

It localises to the nucleus. The protein localises to the chromosome. It catalyses the reaction S-ubiquitinyl-[E2 ubiquitin-conjugating enzyme]-L-cysteine + [acceptor protein]-L-lysine = [E2 ubiquitin-conjugating enzyme]-L-cysteine + N(6)-ubiquitinyl-[acceptor protein]-L-lysine.. It functions in the pathway protein modification; protein ubiquitination. Functionally, ubiquitin E3 ligase that acts as a limiting factor for crossing-over during meiosis: required during zygonema to limit the colocalization of RNF212 with MutS-gamma-associated recombination sites and thereby establish early differentiation of crossover and non-crossover sites. Later, it is directed by MutL-gamma to stably accumulate at designated crossover sites. Probably promotes the dissociation of RNF212 and MutS-gamma to allow the progression of recombination and the implementation of the final steps of crossing over. Modulates cyclin-B levels and participates in the regulation of cell cycle progression through the G2 phase. Overexpression causes delayed entry into mitosis. The polypeptide is E3 ubiquitin-protein ligase CCNB1IP1 (Ccnb1ip1) (Mus musculus (Mouse)).